The following is a 314-amino-acid chain: Acetaldehyde dehydrogenase 2 (314 aa).

An NAD(+)-binding site is contributed by 11-14 (SGNI). Cys-129 (acyl-thioester intermediate) is an active-site residue. Residues 160–168 (SAGPGTRAN) and Asn-291 contribute to the NAD(+) site.

This sequence belongs to the acetaldehyde dehydrogenase family.

The catalysed reaction is acetaldehyde + NAD(+) + CoA = acetyl-CoA + NADH + H(+). The protein is Acetaldehyde dehydrogenase 2 of Rhodococcus erythropolis (strain PR4 / NBRC 100887).